A 414-amino-acid polypeptide reads, in one-letter code: MSGIIATYLIHDDSHNLEKKAEQIALGLTIGSWTHLPHLLQEQLKQHKGNVIHVEELAEHEHTNSYLRKKVKRGIIKIEYPLLNFSPDLPAILTTTFGKLSLDGEVKLIDLTFSDGLKKHFPGPKFGIDGIRNLLQVHDRPLLMSIFKGMIGRNIGYLKTQLRDQAIGGVDIVKDDEILFENALTPLTKRIVSGKEVLQSVYETYGHKTLYAVNVTGRTFDLKENAKRAVQAGADILLFNVFAYGLDVLQSLAEDDEIPVPIMAHPAVSGAYSASKLYGISSPLLLGKLLRYAGADFSLFPSPYGSVALEKEEALAISKYLTEDDVFFKKSFSVPSAGIHPGFVPFIIRDFGKDVVINAGGGIHGHPNGAQGGGKAFRTAIDATLQNKPLHEVDDINLHSALQIWGNPSHEVKL.

K99 acts as the Proton acceptor in catalysis. Substrate contacts are provided by residues K148, K174–E177, H265, G338, and G360–G361. K174, D176, and E177 together coordinate Mg(2+). At K174 the chain carries N6-carboxylysine.

This sequence belongs to the RuBisCO large chain family. Type IV subfamily. Homodimer. Requires Mg(2+) as cofactor.

It catalyses the reaction 5-methylsulfanyl-2,3-dioxopentyl phosphate = 2-hydroxy-5-methylsulfanyl-3-oxopent-1-enyl phosphate. It functions in the pathway amino-acid biosynthesis; L-methionine biosynthesis via salvage pathway; L-methionine from S-methyl-5-thio-alpha-D-ribose 1-phosphate: step 3/6. Functionally, catalyzes the enolization of 2,3-diketo-5-methylthiopentyl-1-phosphate (DK-MTP-1-P) into 2-hydroxy-3-keto-5-methylthiopentenyl-1-phosphate (HK-MTPenyl-1-P). The sequence is that of 2,3-diketo-5-methylthiopentyl-1-phosphate enolase from Bacillus cereus (strain ZK / E33L).